We begin with the raw amino-acid sequence, 385 residues long: MTVNGKDIDSPNAQYVAAGIDMSDLFPAPFPTNVKTVHLETLSLAKLLQRDEDELRRIYENCKDPGFFQLDLTDDEQGVQLLQDAVDCARLMKQLLPNMSVEEKRMYKQHSRVGVYSKGYQVYDVLPNGQPKYNETVNFPMTEMLGYGDSTVDLPDWLSPHRELFQRTMRSGNKIANIVLAALEVGLQVPRGALTDAHRIQDPSDDFLRLLRYPGLQPGQPRDDLCFPAHKDFTSLGILFTWLGGLQLLASASAPGVTSGTMTGPLDIAEDAWRWVQPVPGTAIVNVGNALEILTNKALTSGLHRVVRAPGEQLPFDRYSVLVGTRPANSFPMKPLQSPQISPVLDPAAAEIATMTSGQWGTHNIGSFNNWVKARTERQEVLIIP.

Residues Pro203 to Pro327 form the Fe2OG dioxygenase domain. Fe cation contacts are provided by His230, Asp232, and His304. Residue Arg318 participates in 2-oxoglutarate binding.

It belongs to the iron/ascorbate-dependent oxidoreductase family. It depends on Fe(2+) as a cofactor.

Its function is as follows. 2-oxoglutarate-dependent dioxygenase; part of the gene cluster that mediates the biosynthesis of fumigermin that inhibits germination of spores of the inducing S.rapamycinicus, and thus helps the fungus to defend resources in the shared habitat against a bacterial competitor. The partially reducing polyketide synthase fngA alone is sufficient for the production of fumigermin. FgnA catalyzes the condensation of 3 malonyl-CoA units to an acetyl-CoA starter, and 3 methylations to yield fumigermin. It is remarkable that the five cluster genes including fgnA are conserved in distantly related fungi, supporting the assumption of a fumigermin cluster; it is thus possible that originally all five genes were functional, but that the genes encoding tailoring enzymes became inactive from mutations, similar to the case of the fgnA gene in strains A1163 and Af293. This is 2-oxoglutarate-dependent dioxygenase AFUA_1G01000 from Aspergillus fumigatus (strain ATCC MYA-4609 / CBS 101355 / FGSC A1100 / Af293) (Neosartorya fumigata).